Consider the following 309-residue polypeptide: 2-dehydropantoate 2-reductase (309 aa).

NADP(+) is bound by residues 7 to 12, Arg-31, and Lys-74; that span reads GAGSIG. CoA is bound by residues 8–10, Arg-31, Lys-74, and Cys-84; that span reads AGS. 2 residues coordinate NADP(+): Asn-100 and Ala-124. Lys-180 functions as the Proton donor in the catalytic mechanism. Substrate is bound by residues Lys-180, Asn-184, Asn-188, Asn-198, and 247-250; that span reads NYNS. Arg-257 provides a ligand contact to CoA. NADP(+) is bound at residue Glu-262.

Belongs to the ketopantoate reductase family. In terms of assembly, homodimer.

The protein localises to the cytoplasm. The enzyme catalyses (R)-pantoate + NAD(+) = 2-dehydropantoate + NADH + H(+). It catalyses the reaction (R)-pantoate + NADP(+) = 2-dehydropantoate + NADPH + H(+). Its pathway is cofactor biosynthesis; coenzyme A biosynthesis. Regulated by feedback inhibition by coenzyme A (CoA). CoA acts by competing with NAD(P)H. A disulfide bond is formed between CoA and Cys-84, which indicates an irreversible inhibition upon binding of CoA. Its function is as follows. Catalyzes the NAD(P)H-dependent reduction of ketopantoate into pantoic acid. Prefers NADH rather than NADPH as the electron donor. In Thermococcus kodakarensis (strain ATCC BAA-918 / JCM 12380 / KOD1) (Pyrococcus kodakaraensis (strain KOD1)), this protein is 2-dehydropantoate 2-reductase.